The chain runs to 957 residues: Glycine dehydrogenase (decarboxylating) (957 aa).

Position 708 is an N6-(pyridoxal phosphate)lysine (K708).

It belongs to the GcvP family. In terms of assembly, the glycine cleavage system is composed of four proteins: P, T, L and H. The cofactor is pyridoxal 5'-phosphate.

The enzyme catalyses N(6)-[(R)-lipoyl]-L-lysyl-[glycine-cleavage complex H protein] + glycine + H(+) = N(6)-[(R)-S(8)-aminomethyldihydrolipoyl]-L-lysyl-[glycine-cleavage complex H protein] + CO2. Functionally, the glycine cleavage system catalyzes the degradation of glycine. The P protein binds the alpha-amino group of glycine through its pyridoxal phosphate cofactor; CO(2) is released and the remaining methylamine moiety is then transferred to the lipoamide cofactor of the H protein. In Salmonella typhimurium (strain LT2 / SGSC1412 / ATCC 700720), this protein is Glycine dehydrogenase (decarboxylating).